Reading from the N-terminus, the 346-residue chain is Putative D-threonate 4-phosphate dehydrogenase (346 aa).

Positions 141 and 142 each coordinate substrate. Positions 171, 215, and 270 each coordinate a divalent metal cation. Substrate-binding residues include Lys-278 and Arg-296.

This sequence belongs to the PdxA family. PdxA2 subfamily. As to quaternary structure, homodimer. A divalent metal cation is required as a cofactor.

It catalyses the reaction 4-O-phospho-D-threonate + NAD(+) = dihydroxyacetone phosphate + CO2 + NADH. Catalyzes the NAD-dependent oxidation and subsequent decarboxylation of D-threonate 4-phosphate to produce dihydroxyacetone phosphate (DHAP). This is Putative D-threonate 4-phosphate dehydrogenase from Cutibacterium acnes (strain DSM 16379 / KPA171202) (Propionibacterium acnes).